Reading from the N-terminus, the 151-residue chain is Small ribosomal subunit protein uS15 (151 aa).

The protein belongs to the universal ribosomal protein uS15 family.

The sequence is that of Small ribosomal subunit protein uS15 (RPS13) from Wuchereria bancrofti.